The sequence spans 132 residues: Small ribosomal subunit protein uS8 (132 aa).

This sequence belongs to the universal ribosomal protein uS8 family. As to quaternary structure, part of the 30S ribosomal subunit. Contacts proteins S5 and S12.

In terms of biological role, one of the primary rRNA binding proteins, it binds directly to 16S rRNA central domain where it helps coordinate assembly of the platform of the 30S subunit. In Exiguobacterium sp. (strain ATCC BAA-1283 / AT1b), this protein is Small ribosomal subunit protein uS8.